Here is a 123-residue protein sequence, read N- to C-terminus: Large ribosomal subunit protein bL12 (123 aa).

Belongs to the bacterial ribosomal protein bL12 family. Homodimer. Part of the ribosomal stalk of the 50S ribosomal subunit. Forms a multimeric L10(L12)X complex, where L10 forms an elongated spine to which 2 to 4 L12 dimers bind in a sequential fashion. Binds GTP-bound translation factors.

Functionally, forms part of the ribosomal stalk which helps the ribosome interact with GTP-bound translation factors. Is thus essential for accurate translation. This chain is Large ribosomal subunit protein bL12, found in Desulfotalea psychrophila (strain LSv54 / DSM 12343).